The sequence spans 419 residues: MNHTIISLALIFFQLTTTALVVGFTSREHLFLRAIGSVPQGFSAYHQIVFLCSHISNPVNRAFLGAASVFLVILYVDAAILSRWTFASQSPTSSLGGLIPPTTRDTPKTQNNATTAETSASFLRKLSFGFLIALQSRFPATPWAVPRLPPFHKADPKHTPTKSAFLLKNTTKCLVYLLLLRATSGLGNPDDNPVVFASDRIPLFSRLGDKGPGGITLSEIGTRVGAVMGYWAIQYAVIDLLYSLLAVVAVSLHLTDVKGWVPVFGSVSDARGVRLFWGQFYHQLVRQGCSSIAHYITYFILRFRKDSGSLAARYVFMTLVFAVSGVFHTLSDVSQGIPLGESGAMRFFVLQAIGIMLEDGFQAIVSRRRQSGHHGRGKLERVLGSVSGPVWLVTWLTWTSPGWIYMSLQRDRGVPIIPF.

N-linked (GlcNAc...) asparagine glycosylation is present at Asn2. Helical transmembrane passes span 4–24 (TIIS…VVGF) and 62–82 (AFLG…AILS). The interval 89-114 (QSPTSSLGGLIPPTTRDTPKTQNNAT) is disordered. Residues Asn112 and Asn169 are each glycosylated (N-linked (GlcNAc...) asparagine). The next 4 membrane-spanning stretches (helical) occupy residues 230–250 (YWAI…VVAV), 314–334 (YVFM…SDVS), 337–357 (IPLG…GIML), and 386–406 (VSGP…WIYM).

It belongs to the wax synthase family.

The protein localises to the membrane. It catalyses the reaction 3-O-(beta-D-glucopyranosyl)-2alpha-hydroxyisomotiol + acetyl-CoA = 3-O-(beta-D-glucopyranosyl)-2alpha-acetoxyisomotiol + CoA. It carries out the reaction 2-deacetylfuscoatroside + acetyl-CoA = fuscoatroside + CoA. It functions in the pathway secondary metabolite biosynthesis; terpenoid biosynthesis. Functionally, terpene cyclase-glycosyl transferase fusion protein; part of the gene cluster that mediates the biosynthesis of the enfumafungin-type antibiotic, fuscoatroside. Within the pathway, fsoF catalyzes the acetylation of C2-alpha-OH following the C2 hydroxylation by the cytochrome monooxygenase fsoD. The fuscoatroside biosynthesis is initiated by the cyclization of 2,3(S)-oxidosqualene through FsoA's terpene cyclase (TC) domain, leading to the formation of the fernane skeleton isomotiol, harboring a fernane triterpene skeleton with a C8-C9 double bond. Subsequently, C2-alpha-hydroxylation mediated by fsoD results in the production of 2-alpha-hydroxy-isomotiol, which is further acetylated by fsoF. The glycosyltransferase (GT) domain of FsoA may convert isomotiol, 2-alpha-hydroxy-isomotiol, and the acetylated derivative of 2-alpha-hydroxy-isomotiol into their corresponding glycosides 3-O-(beta-D-glucopyranosyl)-isomotiol, 3-O-(beta-D-glucopyranosyl)-2-alpha-hydroxy-isomotiol, and 3-O-(beta-D-glucopyranosyl)-2-alpha-acetoxy-isomotiol, which then undergo oxidative cleavage under the action of fsoE to form s 2-deacetoxy-fuscoatroside, 2-deacetyl-fuscoatroside, and fuscoatroside, respectively. Although hydroxylation followed by acetylation of 3-O-(beta-D-glucopyranosyl)-isomotiol and 2-deacetoxy-fuscoatroside by fsoD and fsoF could not be ruled out, this process is likely to occur with difficulty due to bulky steric hindrance caused by the presence of a glycan at C3 in these compounds. Interestingly, fsoE can also utilize the aglycones isomotiol and 2-alpha-hydroxy-isomotiol as substrates to generate 19-beta-hydroxy-isomotiol and 2-alpha,19-beta-dihydroxy-isomotiol, respectively. These reactions occur with lower efficiency. Finally, fsoE can further convert 2-alpha,19-beta-dihydroxy-isomotiol into 2-alpha-hydroxy-ismotiol-19-one and 2-alpha-hydroxy-ismotiol-19-one into 2-deacetyl-3-deglucopyranosyl-fuscoatroside. The protein is Acetyltransferase fsoF of Humicola fuscoatra.